The primary structure comprises 152 residues: Proteolipid protein 2 (152 aa).

Positions 19–137 (FSRTRKGILL…DAYFTFPLRQ (119 aa)) constitute an MARVEL domain. 3 consecutive transmembrane segments (helical) span residues 25 to 45 (GILL…FSAG), 48 to 68 (GYSS…VIYM), and 85 to 105 (FFRT…VLVE). Asn108 is a glycosylation site (N-linked (GlcNAc...) asparagine). Residues 112–132 (IAAGVLGLLATCLFGYDAYFT) form a helical membrane-spanning segment.

The protein resides in the membrane. Functionally, may play a role in cell differentiation in the intestinal epithelium. The chain is Proteolipid protein 2 (PLP2) from Oryctolagus cuniculus (Rabbit).